Reading from the N-terminus, the 196-residue chain is MSLVLDPAAQDLLFREARTANTFTDEPVTDEQVQAIYDLVKYGPTAFNQSPLRITLVRSPEARERLVAHMAEGNRPKTAAAPLVAILSADNEFHEELPELFPHFPAAKDAFFSERPVREGAATLNAALQAAYFIVGVRAAGLAAGPMTGLDFEGVRKEFLDDDHTPLMVVNIGRPGPDAWFPRSPRLAYDQVVTTV.

It belongs to the nitroreductase family. HadB/RutE subfamily. The cofactor is FMN.

The chain is Putative NADH dehydrogenase/NAD(P)H nitroreductase SCO5049 from Streptomyces coelicolor (strain ATCC BAA-471 / A3(2) / M145).